The primary structure comprises 267 residues: Large ribosomal subunit protein uL4 (267 aa).

This sequence belongs to the universal ribosomal protein uL4 family. As to quaternary structure, part of the 50S ribosomal subunit.

Functionally, one of the primary rRNA binding proteins, this protein initially binds near the 5'-end of the 23S rRNA. It is important during the early stages of 50S assembly. It makes multiple contacts with different domains of the 23S rRNA in the assembled 50S subunit and ribosome. Its function is as follows. Forms part of the polypeptide exit tunnel. The chain is Large ribosomal subunit protein uL4 from Saccharolobus islandicus (strain L.S.2.15 / Lassen #1) (Sulfolobus islandicus).